We begin with the raw amino-acid sequence, 1391 residues long: DNA-directed RNA polymerase subunit beta'' (1391 aa).

4 residues coordinate Zn(2+): C220, C291, C298, and C301.

The protein belongs to the RNA polymerase beta' chain family. RpoC2 subfamily. In terms of assembly, in plastids the minimal PEP RNA polymerase catalytic core is composed of four subunits: alpha, beta, beta', and beta''. When a (nuclear-encoded) sigma factor is associated with the core the holoenzyme is formed, which can initiate transcription. The cofactor is Zn(2+).

Its subcellular location is the plastid. It localises to the chloroplast. The enzyme catalyses RNA(n) + a ribonucleoside 5'-triphosphate = RNA(n+1) + diphosphate. DNA-dependent RNA polymerase catalyzes the transcription of DNA into RNA using the four ribonucleoside triphosphates as substrates. In Gossypium barbadense (Sea Island cotton), this protein is DNA-directed RNA polymerase subunit beta''.